The primary structure comprises 165 residues: MSVATGSSETAGGASGGGARVFFQSPRGGAGGSPGSSSGSGSSREDSAPVATAAAAGQVQQQQQRRHQQGKVTVKYDRKELRKRLVLEEWIVEQLGQLYGCEEEEMPEVEIDIDDLLDADSDEERASKLQEALVDCYKPTEEFIKELLSRIRGMRKLSPPQKKSV.

Positions Met1–Gly12 are enriched in low complexity. Residues Met1–Thr73 form a disordered region. Ser2 is modified (N-acetylserine). Position 25 is a phosphoserine (Ser25). Arg27 carries the post-translational modification Omega-N-methylarginine. Residue Ser33 is modified to Phosphoserine. Residues Gly35–Gln63 are compositionally biased toward low complexity. Thr73 carries the phosphothreonine; by ILK1 modification.

The protein belongs to the PP1 inhibitor family. Post-translationally, has over 600-fold higher inhibitory activity when phosphorylated, creating a molecular switch for regulating the phosphorylation status of PPP1CA substrates and smooth muscle contraction. The main inhibitory site appears to be Thr-73. Detected in breast cancer.

It is found in the cytoplasm. It localises to the membrane. In terms of biological role, inhibitor of the PP1 regulatory subunit PPP1CA. This chain is Protein phosphatase 1 regulatory subunit 14C (PPP1R14C), found in Homo sapiens (Human).